Here is a 1037-residue protein sequence, read N- to C-terminus: MDRARPGRRRASSEIVTEGKRKKSSPADLQKITKLLTVKSEDVLAQSPLSKLRGSECWWTRSLRNKVICLDHKKPKAARGCPPKGLPKRHLRVMLTNVLWTDLGREFRKTLPRKDANLCAPSKVQSDSLPSTSVDSIETCQRLDPLHQSLNLSERTPRVILTDIRQTELGRKYLKIPPVTEASLSDTANLKSEQLSSSSDGSLESCQSVNHHKSFLSESGPKPSRTGDVPAKEAACGGQKQGDDGGVTPEMAAPHPKDFNTGNKGCDYLEEGTSNKNTSYSYSEMDHTPVSRKRKKRGRSNFHDSHNSKTSLDKPTEHTKEEENDSSVSRKLEESGEDSHQDPAPPEGLAPESLESEATNLRSFAAGQEPDASAASGRASSPNKSLESSASSEVSENSSVAVKGEALTLKEASPPGGSSEESQLLISAEPIVVSSDEEGPVEHKNSVILKLQPPHEIMSENQGTSDPQLSELTLGACESVQVTSELFPYNPDVENISCIKSNSEMDLKLDFIFTCVYIGKIKGTPKGCVTFTKKYIKIPFQVSTNEISLTVDTARLKRFGLWESKDEDHSKRSHAILFLWLSSDYLQDIQTQLENPMLSQQSKANEFIFLELNSSISQREELKLKDIMMEISTKNGNLHLSCPLPWVQALPLFQDLSPQEISFLHYYYASASALPTAAGADMKKKSVSQPSNSDTIKPTYTFLHKQSSGCYSLSITSSPEEEWQEVRNTGPVQKLIVYPPPPTKGGLGVTNEDLECLEEGEFLNDVIIDFYLKYLLLEKASDELVERSHIFSSFFYKCLTRKENNLTEDNPDLSVAQRRHRRVRTWTRHINIFNKDYIFVPVNESSHWYLAVICFPWLEEAVYEDCPQTVSQQFQGQQSQHDHKMTDNDPHTTSTVSTSAEDSQSTEVNMSVPKKMCKRPCILILDSLKAASIQNTVQNLREYLEVEWEVKRKTHREFSKTNMVDLCPKVPKQDNSSDCGVYLLQYVESFFQDPIVNFELPIHLEKWFPRHVIKTKREDIRELILKLHLQQQKGGSC.

Residues 1–10 are compositionally biased toward basic residues; sequence MDRARPGRRR. Disordered regions lie at residues 1 to 27 and 185 to 399; these read MDRA…SSPA and SDTA…ENSS. A phosphoserine mark is found at Ser-12, Ser-13, and Ser-25. Residues 192–208 show a composition bias toward low complexity; it reads SEQLSSSSDGSLESCQS. A compositionally biased stretch (polar residues) spans 272–282; the sequence is GTSNKNTSYSY. The span at 290–300 shows a compositional bias: basic residues; that stretch reads VSRKRKKRGRS. 2 stretches are compositionally biased toward basic and acidic residues: residues 301–321 and 328–341; these read NFHD…HTKE and VSRK…DSHQ. Residues 379–399 show a composition bias toward low complexity; it reads ASSPNKSLESSASSEVSENSS. 2 positions are modified to phosphoserine: Ser-434 and Ser-435. The tract at residues 747–1037 is protease; sequence LGVTNEDLEC…HLQQQKGGSC (291 aa). His-847 is a catalytic residue. The tract at residues 873–909 is disordered; the sequence is QFQGQQSQHDHKMTDNDPHTTSTVSTSAEDSQSTEVN. The span at 880–890 shows a compositional bias: basic and acidic residues; the sequence is QHDHKMTDNDP. Polar residues predominate over residues 891-909; sequence HTTSTVSTSAEDSQSTEVN. The active site involves Asp-926. The active-site Nucleophile is Cys-979.

Belongs to the peptidase C48 family.

Its subcellular location is the cytoplasm. Functionally, protease that acts as a positive regulator of the cGAS-STING pathway by catalyzing desumoylation of CGAS. Desumoylation of CGAS promotes DNA-binding activity of CGAS, subsequent oligomerization and activation. Deconjugates SUMO2 and SUMO3 from targeted proteins, but not SUMO1. Catalyzes the deconjugation of poly-SUMO2 and poly-SUMO3 chains. Has very low efficiency in processing full-length SUMO proteins to their mature forms. This is Sentrin-specific protease 7 from Mus musculus (Mouse).